The primary structure comprises 235 residues: Orotidine 5'-phosphate decarboxylase (235 aa).

Substrate-binding positions include Asp10, Lys33, 60-69, Thr123, Arg185, Gln194, Gly214, and Arg215; that span reads DLKMNDIPNT. Catalysis depends on Lys62, which acts as the Proton donor.

The protein belongs to the OMP decarboxylase family. Type 1 subfamily. In terms of assembly, homodimer.

It carries out the reaction orotidine 5'-phosphate + H(+) = UMP + CO2. It participates in pyrimidine metabolism; UMP biosynthesis via de novo pathway; UMP from orotate: step 2/2. Its function is as follows. Catalyzes the decarboxylation of orotidine 5'-monophosphate (OMP) to uridine 5'-monophosphate (UMP). The polypeptide is Orotidine 5'-phosphate decarboxylase (Lactobacillus johnsonii (strain CNCM I-12250 / La1 / NCC 533)).